The sequence spans 154 residues: Fimbrial protein (154 aa).

Positions 1–6 (MKAQKG) are cleaved as a propeptide — leader sequence. Phenylalanine 7 bears the N-methylphenylalanine mark. Residues 7–27 (FTLIELMIVVAIIGILAAIAI) form a helical membrane-spanning segment. The cysteines at positions 133 and 151 are disulfide-linked.

This sequence belongs to the N-Me-Phe pilin family. As to quaternary structure, the pili are polar flexible filaments of about 5.4 nanometers diameter and 2.5 micrometers average length; they consist of only a single polypeptide chain arranged in a helical configuration of five subunits per turn in the assembled pilus.

It localises to the fimbrium. Its subcellular location is the membrane. In Pseudomonas aeruginosa, this protein is Fimbrial protein (pilA).